The chain runs to 265 residues: ClpXP adapter protein SpxH (265 aa).

Belongs to the SpxH family. As to quaternary structure, interacts with Spx.

Its subcellular location is the cytoplasm. Functionally, adapter protein required for efficient degradation of Spx by ClpXP under non-stress conditions. Interaction with Spx stabilizes Spx and exposes the C-terminus of Spx for recognition and proteolysis by ClpXP. This Staphylococcus haemolyticus (strain JCSC1435) protein is ClpXP adapter protein SpxH.